A 1269-amino-acid chain; its full sequence is MSNNSKSPPNEQHQQQPHPPDVLVQLTESFQHFFQSLSPQYQSMTSLPSINKDSYTSVGSAPTTNNNSNSNSNSNSSNRSLNNSGSSNSGGGGSNSNKKVNNNNNNNNNNNNNNLQSPTQSQFPYHYQYSSKALHDFEEKRKLLIEQLKSVKINLDTQCDDDPISFIKIRMELTKVKTSLETELKSLDELLHTTSEVEEPNPTPIDSITSLLTMIMPSSISNSVTNNTPSSATPLTLSNNNNYTSSSLATSPTTNSSSSSSSSSSSSSTHYYNSSISSNSLSSNLPPSSIPILNTSNNKNSYPNSIIPQGTPLDNPDPNLPRFPQRDHISVKLYVDCDDYFAASAQAIENATREVFITAWFLSPEVYLIRFPSLDERYRLDNLLKRKAMQGVKIFIILWDETKIATFKGSKRAKDKLEELHTNIKVIKHPPIIPIYWSHHQKTLIIDQEIAFVGGVDFCFGRFDTWCHHLIDVNSTLWKGKDYYNPILGDMGDILVPFEDSVDRKKIPRMPWHDVMAGVNGLAARDVALNFILRWNHHKDDYYPQLYFDTTPLSPVGTSQCQLLRSMDEWSGGGRIERSIHTAYVQAIEDANHYIYIENQNFVSTHAPNVWNQISFEIVKRIKRAIRKKEVFRVFIVIPCQQDGKVEETQIKGLMHWQYSTIIRGENTIMKLLRRDCPDVDLTEYICFLSLRTHAFLEGTFVTEQIYVHSKLMIVDDRTIIVGSANINDRSLIGERDSELAFIIRDEIDTIQTKMNGQDYIASRLVFNFRLRLWKEHLGLLPQINYPPHDQINNDINNIVNLNNNNNSNINNNINNNNNEINNNNNNNNNNNSNEINNNNSDGILNNSNSFHHGSVSDNLPPLNPSSNLNSSNKKLPTTTTAAAAATTTTTTTTTTTTTNGTGTTNKQKTSHHRSNSFQGLVLQSPGSNRSNLSSPQDSPQDSPRLKNLAEEISPPPTEQHQHQSPITDINLILENVDTIIHSNEQLPPPPSSTTPPPPPPPLTTTDSVIIEDYKSDGGNLNIENNNSNNTILTNAATSMNNSTSSLSSTSLPTTTTTTTAQQQQQQQQQQQQQQQQQQQQQQQQQQQQQQQQQQQPSQQQQQQQQQLSQQQQLQIKKKRSSISPSTSSNKLLLSGNGSGDSIRVVTDSGSSPRGQPRSMSSLHDHADSSYCQKSNIDLIDPTCSDFYFGVWIATAASNTRIYDTVFPAIPKNSIKTCEQFAQLQKIPVSLADSKLLSEVRGNLVFHPLDFLEGEDLQPSFLFTDDLFQ.

Residues 55–64 (YTSVGSAPTT) are compositionally biased toward polar residues. Residues 55–121 (YTSVGSAPTT…NNNLQSPTQS (67 aa)) form a disordered region. Low complexity-rich tracts occupy residues 65 to 87 (NNNS…SGSS) and 95 to 114 (NSNK…NNNN). A coiled-coil region spans residues 131-192 (SKALHDFEEK…ELKSLDELLH (62 aa)). Residues 222–232 (NSVTNNTPSSA) are compositionally biased toward polar residues. 2 disordered regions span residues 222-269 (NSVT…SSST) and 300-320 (NSYP…DPNL). The segment covering 233 to 269 (TPLTLSNNNNYTSSSLATSPTTNSSSSSSSSSSSSST) has biased composition (low complexity). 2 PLD phosphodiesterase domains span residues 435-462 (IYWS…CFGR) and 704-731 (EQIY…NDRS). Residues His-440, Lys-442, Asp-447, His-709, Lys-711, and Asp-716 contribute to the active site. Positions 803 to 835 (NNNNNSNINNNINNNNNEINNNNNNNNNNNSNE) form a coiled coil. Composition is skewed to low complexity over residues 810-850 (INNN…NSNS), 859-906 (NLPP…GTTN), and 934-943 (SSPQDSPQDS). 2 disordered regions span residues 810–966 (INNN…HQSP) and 983–1007 (SNEQ…TTTD). Pro residues predominate over residues 987–1003 (LPPPPSSTTPPPPPPPL). Residues 1059–1096 (TTAQQQQQQQQQQQQQQQQQQQQQQQQQQQQQQQQQQQ) adopt a coiled-coil conformation. Residues 1116 to 1167 (IKKKRSSISPSTSSNKLLLSGNGSGDSIRVVTDSGSSPRGQPRSMSSLHDHA) are disordered. Positions 1122 to 1142 (SISPSTSSNKLLLSGNGSGDS) are enriched in low complexity. Polar residues predominate over residues 1148-1162 (DSGSSPRGQPRSMSS).

This sequence belongs to the phospholipase D family.

The enzyme catalyses a 1,2-diacyl-sn-glycero-3-phosphocholine + H2O = a 1,2-diacyl-sn-glycero-3-phosphate + choline + H(+). With respect to regulation, inhibited by butan-1-ol. In terms of biological role, plays a role in cell growth. Hydrolyzes membrane phospholipids, such as PtdCho free headgroup and PtdOH (phosphatidic acid; signaling molecule on its own). Involved in the inhibition of actin-based motility and endocytosis. Its inhibition causes complete collapse of F-actin organization. This Dictyostelium discoideum (Social amoeba) protein is Phospholipase D A (pldA).